The chain runs to 619 residues: ATP-dependent zinc metalloprotease FtsH (619 aa).

The Cytoplasmic segment spans residues 1–11 (MDKQSKFRIKT). The chain crosses the membrane as a helical span at residues 12 to 32 (FFKKIIFFLIIFCFFYFFNFI). Residues 33 to 131 (KKTKKITHTT…FKNYKIYTVL (99 aa)) are Periplasmic-facing. A helical transmembrane segment spans residues 132–152 (NFFYDYGFFLMIIIICWIFIF). The Cytoplasmic segment spans residues 153-619 (RKIASRSSES…FKEDFASILD (467 aa)). 224 to 231 (GPPGTGKT) provides a ligand contact to ATP. His447 provides a ligand contact to Zn(2+). The active site involves Glu448. Residues His451 and Asp522 each coordinate Zn(2+).

In the central section; belongs to the AAA ATPase family. It in the C-terminal section; belongs to the peptidase M41 family. As to quaternary structure, homohexamer. The cofactor is Zn(2+).

It localises to the cell inner membrane. Functionally, acts as a processive, ATP-dependent zinc metallopeptidase for both cytoplasmic and membrane proteins. Plays a role in the quality control of integral membrane proteins. This chain is ATP-dependent zinc metalloprotease FtsH, found in Karelsulcia muelleri (strain DMIN) (Sulcia muelleri).